A 387-amino-acid polypeptide reads, in one-letter code: Putative ankyrin repeat protein RBE_0984 (387 aa).

ANK repeat units lie at residues 50 to 79 (YGNTPLSLALNKKLEAVCEVLVSRMSDKDI), 88 to 119 (HRETYFTLAAIKGFKGVCENLAPRMSNEAINV), 123 to 154 (RKHTALTLAADKNLPQVCIKLIPIMFDEVINV), 159 to 188 (HKDSALRKAIWNDLDVVCQMLIPVTSKENI), and 210 to 239 (VCKMLISRMIEDNSLDIINHVISKGELKGE). Coiled coils occupy residues 251 to 278 (FEDICELLQKSHEEYKEQKQKENEKKCE) and 311 to 352 (SISA…ALEK).

This chain is Putative ankyrin repeat protein RBE_0984, found in Rickettsia bellii (strain RML369-C).